Reading from the N-terminus, the 895-residue chain is Putative endoplasmic reticulum metallopeptidase 1-B (895 aa).

Residues Met-1–Thr-27 are disordered. The Cytoplasmic segment spans residues Met-1–Arg-39. The span at His-9–Thr-27 shows a compositional bias: basic and acidic residues. A helical transmembrane segment spans residues Pro-40–Leu-60. The Lumenal portion of the chain corresponds to His-61 to Thr-374. Asn-156 is a glycosylation site (N-linked (GlcNAc...) asparagine). 2 residues coordinate Zn(2+): His-180 and Asp-192. Glu-226 (proton acceptor) is an active-site residue. The Zn(2+) site is built by Glu-227, Glu-253, and His-329. The helical transmembrane segment at Val-375–Val-395 threads the bilayer. Residues Asn-396–Asp-424 are Cytoplasmic-facing. The chain crosses the membrane as a helical span at residues Tyr-425–Phe-445. Over Thr-446 to Trp-457 the chain is Lumenal. A helical membrane pass occupies residues Leu-458–Leu-478. Topologically, residues Thr-479–Glu-489 are cytoplasmic. A helical transmembrane segment spans residues Tyr-490–Tyr-512. Residues Asp-513 to Ala-515 lie on the Lumenal side of the membrane. The helical transmembrane segment at Ser-516–Trp-538 threads the bilayer. Topologically, residues Pro-539 to Ser-553 are cytoplasmic. Residues Phe-554–Ile-574 form a helical membrane-spanning segment. Residues Met-575–Pro-584 are Lumenal-facing. A helical membrane pass occupies residues Ala-585 to Val-605. The Cytoplasmic segment spans residues Ala-606–Leu-619. A helical transmembrane segment spans residues Leu-620 to Phe-640. Residues Ser-641–Phe-895 lie on the Lumenal side of the membrane. 2 N-linked (GlcNAc...) asparagine glycosylation sites follow: Asn-679 and Asn-796.

This sequence belongs to the peptidase M28 family. Zn(2+) serves as cofactor.

Its subcellular location is the endoplasmic reticulum membrane. The protein is Putative endoplasmic reticulum metallopeptidase 1-B of Caenorhabditis elegans.